A 141-amino-acid polypeptide reads, in one-letter code: Nucleoside diphosphate kinase (141 aa).

Positions 11, 59, 87, 93, 104, and 114 each coordinate ATP. Residue H117 is the Pros-phosphohistidine intermediate of the active site.

Belongs to the NDK family. As to quaternary structure, homotetramer. It depends on Mg(2+) as a cofactor.

Its subcellular location is the cytoplasm. It catalyses the reaction a 2'-deoxyribonucleoside 5'-diphosphate + ATP = a 2'-deoxyribonucleoside 5'-triphosphate + ADP. The enzyme catalyses a ribonucleoside 5'-diphosphate + ATP = a ribonucleoside 5'-triphosphate + ADP. Functionally, major role in the synthesis of nucleoside triphosphates other than ATP. The ATP gamma phosphate is transferred to the NDP beta phosphate via a ping-pong mechanism, using a phosphorylated active-site intermediate. In Proteus mirabilis (strain HI4320), this protein is Nucleoside diphosphate kinase.